The primary structure comprises 580 residues: DNA mismatch repair protein MutL (580 aa).

Belongs to the DNA mismatch repair MutL/HexB family.

This protein is involved in the repair of mismatches in DNA. It is required for dam-dependent methyl-directed DNA mismatch repair. May act as a 'molecular matchmaker', a protein that promotes the formation of a stable complex between two or more DNA-binding proteins in an ATP-dependent manner without itself being part of a final effector complex. This chain is DNA mismatch repair protein MutL, found in Chlamydia felis (strain Fe/C-56) (Chlamydophila felis).